A 29-amino-acid polypeptide reads, in one-letter code: Glucagon (29 aa).

Belongs to the glucagon family.

The protein resides in the secreted. In terms of biological role, promotes hydrolysis of glycogen and lipids, and raises the blood sugar level. The sequence is that of Glucagon (gcg) from Thunnus obesus (Bigeye tuna).